Here is a 442-residue protein sequence, read N- to C-terminus: CAAX prenyl protease 1 homolog (442 aa).

Topologically, residues 1 to 62 are lumenal; that stretch reads MDASCLFKAL…KARDYKIDNH (62 aa). Residues 63–83 form a helical membrane-spanning segment; it reads LFGFFHSWFNQLLLTAQLIGG. Tyr84 is a topological domain (cytoplasmic). Residues 85–105 traverse the membrane as a helical segment; sequence YPFLWYATASYPLHVAVFLSI. Residues 106–146 are Lumenal-facing; sequence NSIIETIIDLPWDLYSTFIIEDAHGFNKQTIGFYFVDKIKK. The helical transmembrane segment at 147-167 threads the bilayer; it reads MLVGFALTMPIVYGIEWIIVN. The Cytoplasmic segment spans residues 168-170; sequence GGP. The chain crosses the membrane as a helical span at residues 171 to 191; it reads YFFVYIWLFVSVVVLLLMTIY. The Lumenal portion of the chain corresponds to 192-311; it reads PTFIAPLFDK…ELGHWALWHT (120 aa). His301 is a binding site for Zn(2+). Glu302 is an active-site residue. Residue His305 participates in Zn(2+) binding. A helical transmembrane segment spans residues 312–332; that stretch reads LINLVITEVNLFFSFAVFGYF. The Cytoplasmic portion of the chain corresponds to 333 to 349; sequence YKWEALYQGFGYHDTPP. The helical transmembrane segment at 350-370 threads the bilayer; that stretch reads VIGMMLIFQFVLALYNQLASI. At 371–442 the chain is on the lumenal side; it reads GMVIHSRSAE…AVRAFQAKNK (72 aa). Glu380 serves as a coordination point for Zn(2+). Catalysis depends on Asp384, which acts as the Proton donor.

It belongs to the peptidase M48A family. It depends on Zn(2+) as a cofactor.

Its subcellular location is the endoplasmic reticulum membrane. The protein localises to the membrane. It catalyses the reaction Hydrolyzes the peptide bond -P2-(S-farnesyl or geranylgeranyl)C-P1'-P2'-P3'-COOH where P1' and P2' are amino acids with aliphatic side chains and P3' is any C-terminal residue.. Proteolytically removes the C-terminal three residues of farnesylated proteins. The sequence is that of CAAX prenyl protease 1 homolog from Caenorhabditis elegans.